Reading from the N-terminus, the 487-residue chain is Histamine H1 receptor (487 aa).

Residues 1 to 29 (MSLPNSSCLLEDKMCESNKTTMASPQLMP) lie on the Extracellular side of the membrane. N-linked (GlcNAc...) asparagine glycans are attached at residues Asn5 and Asn18. The chain crosses the membrane as a helical span at residues 30–50 (LVVVLSTICLVTVGLNLLVLY). The Cytoplasmic portion of the chain corresponds to 51–64 (AVRSERKLHTVGNL). The chain crosses the membrane as a helical span at residues 65 to 89 (YIVSLSVADLIVGAVVMPMNILYLL). The Extracellular segment spans residues 90–97 (MSKWSLGR). The chain crosses the membrane as a helical span at residues 98-123 (PLCLFWLSMDYVASTASIFSVFILCI). Cys100 and Cys180 form a disulfide bridge. Histamine is bound by residues Asp107 and Thr112. Residues 107–112 (DYVAST) are important for agonist binding. The Cytoplasmic segment spans residues 124-144 (DRYRSVQQPLRYLKYRTKTRA). Thr140 and Thr142 each carry phosphothreonine. Residues 145 to 164 (SATILGAWFLSFLWVIPILG) form a helical membrane-spanning segment. At 165-188 (WNHFMQQTSVRREDKCETDFYDVT) the chain is on the extracellular side. Residues 189–211 (WFKVMTAIINFYLPTLLMLWFYA) traverse the membrane as a helical segment. Asn198 contacts histamine. Residues 212-416 (KIYKAVRQHC…MNRERKAAKQ (205 aa)) lie on the Cytoplasmic side of the membrane. Ser230 bears the Phosphoserine mark. The segment covering 238 to 261 (KLRPENPKGDAKKPGKESPWEVLK) has biased composition (basic and acidic residues). The interval 238–292 (KLRPENPKGDAKKPGKESPWEVLKRKPKDAGGGSVLKSPSQTPKEMKSPVVFSQE) is disordered. Thr279 carries the phosphothreonine modification. Phosphoserine occurs at positions 344 and 347. The tract at residues 345 to 377 (EISEDQMLGDSQSFSRTDSDTTTETASGKGKLR) is disordered. Positions 353-370 (GDSQSFSRTDSDTTTETA) are enriched in polar residues. Phosphoserine is present on residues Ser380, Ser396, and Ser398. A helical membrane pass occupies residues 417-440 (LGFIMAAFILCWIPYFIFFMVIAF). An important for agonist binding region spans residues 424-428 (FILCW). Tyr431 provides a ligand contact to histamine. Cys441 and Cys444 are oxidised to a cystine. The Extracellular portion of the chain corresponds to 441–446 (CKNCCN). A helical transmembrane segment spans residues 447–469 (EHLHMFTIWLGYINSTLNPLIYP). The Cytoplasmic segment spans residues 470–487 (LCNENFKKTFKRILHIRS).

It belongs to the G-protein coupled receptor 1 family. In terms of processing, phosphorylation at sites in the second and third cytoplasmic loops independently contribute to agonist-induced receptor down-regulation.

Its subcellular location is the cell membrane. In terms of biological role, G-protein-coupled receptor for histamine, a biogenic amine that functions as an immune modulator and a neurotransmitter. Through the H1 receptor, histamine mediates the contraction of smooth muscles and increases capillary permeability due to contraction of terminal venules. Also mediates neurotransmission in the central nervous system and thereby regulates circadian rhythms, emotional and locomotor activities as well as cognitive functions. This is Histamine H1 receptor from Gorilla gorilla gorilla (Western lowland gorilla).